A 223-amino-acid polypeptide reads, in one-letter code: Mitochondrial cardiolipin hydrolase (223 aa).

Residues 1–6 lie on the Mitochondrial intermembrane side of the membrane; that stretch reads MGCASS. A helical transmembrane segment spans residues 7-24; it reads KEEVALTPLSDVNAAKEV. Topologically, residues 25–223 are cytoplasmic; sequence ADLKAQVDQL…QFDKLWDMFK (199 aa). The PLD phosphodiesterase domain maps to 164-191; sequence TAAHMHHKFAIIDGRLLLNGSFNWTRQA. Residues histidine 169, lysine 171, and aspartate 176 contribute to the active site.

The protein belongs to the phospholipase D family. MitoPLD/Zucchini subfamily. As to quaternary structure, homodimer.

The protein localises to the mitochondrion outer membrane. Plays a critical role in PIWI-interacting RNA (piRNA) biogenesis. piRNAs provide essential protection against the activity of mobile genetic elements. piRNA-mediated transposon silencing is thus critical for maintaining genome stability. Backbone-non-specific, single strand-specific nuclease, cleaving either RNA or DNA substrates with similar affinity. Produces 5' phosphate and 3' hydroxyl termini, suggesting it could directly participate in the processing of primary piRNA transcripts. Has been proposed to act as a cardiolipin hydrolase to generate phosphatidic acid at mitochondrial surface. Although it cannot be excluded that it can act as a phospholipase in some circumstances, this activity could not be confirmed. In Chlamydomonas reinhardtii (Chlamydomonas smithii), this protein is Mitochondrial cardiolipin hydrolase.